A 1533-amino-acid chain; its full sequence is DNA topoisomerase 2-alpha (1533 aa).

Residue M1 is modified to N-acetylmethionine. The segment at 1–22 is disordered; it reads MEVSPLQPVNENMQVNKTKKNE. Phosphoserine is present on S4. The segment covering 7-16 has biased composition (polar residues); the sequence is QPVNENMQVN. K17 is covalently cross-linked (Glycyl lysine isopeptide (Lys-Gly) (interchain with G-Cter in SUMO2)). ATP contacts are provided by residues N91, N120, and 148–150; that span reads SSN. Glycyl lysine isopeptide (Lys-Gly) (interchain with G-Cter in SUMO2) cross-links involve residues K156 and K157. 161–168 serves as a coordination point for ATP; it reads GRNGYGAK. K261 participates in a covalent cross-link: Glycyl lysine isopeptide (Lys-Gly) (interchain with G-Cter in SUMO2). T282 is subject to Phosphothreonine. The interaction with DNA stretch occupies residues 342–344; it reads KKK. K352 participates in a covalent cross-link: Glycyl lysine isopeptide (Lys-Gly) (interchain with G-Cter in SUMO2). 376-378 provides a ligand contact to ATP; it reads QTK. Glycyl lysine isopeptide (Lys-Gly) (interchain with G-Cter in SUMO2) cross-links involve residues K386, K397, K416, K418, K425, and K440. Residues 455-572 form the Toprim domain; that stretch reads CTLILTEGDS…SLLRHRFLEE (118 aa). E461 is a binding site for Mg(2+). Glycyl lysine isopeptide (Lys-Gly) (interchain with G-Cter in SUMO2) cross-links involve residues K466, K480, and K529. D541 and D543 together coordinate Mg(2+). Residues K584, K599, K614, K622, K625, K632, K639, K655, K662, and K676 each participate in a glycyl lysine isopeptide (Lys-Gly) (interchain with G-Cter in SUMO2) cross-link. In terms of domain architecture, Topo IIA-type catalytic spans 715-1171; sequence IPSMVDGLKP…SPSDLWKEDL (457 aa). Catalysis depends on Y805, which acts as the O-(5'-phospho-DNA)-tyrosine intermediate. The interaction with DNA stretch occupies residues 990–999; the sequence is KLQTSLTCNS. A Glycyl lysine isopeptide (Lys-Gly) (interchain with G-Cter in SUMO2) cross-link involves residue K1075. Disordered stretches follow at residues 1090 to 1121 and 1183 to 1215; these read WKEA…VADS and AKEK…PSPC. Residues 1099–1108 are compositionally biased toward acidic residues; that stretch reads DEEENEESDN. S1106 carries the phosphoserine; by CK1 modification. Glycyl lysine isopeptide (Lys-Gly) (interchain with G-Cter in SUMO2) cross-links involve residues K1114, K1196, and K1204. Residue T1205 is modified to Phosphothreonine. The residue at position 1213 (S1213) is a Phosphoserine. A Glycyl lysine isopeptide (Lys-Gly) (interchain with G-Cter in SUMO2) cross-link involves residue K1228. A disordered region spans residues 1231 to 1533; that stretch reads AEKKIKKKIK…LEESDEDDLF (303 aa). K1240 participates in a covalent cross-link: Glycyl lysine isopeptide (Lys-Gly) (interchain with G-Cter in SUMO1); alternate. Residue K1240 forms a Glycyl lysine isopeptide (Lys-Gly) (interchain with G-Cter in SUMO2); alternate linkage. A Phosphothreonine modification is found at T1244. S1247 carries the post-translational modification Phosphoserine. Residues 1256–1272 are compositionally biased toward basic and acidic residues; the sequence is EGLKQRLEKKQKREPGT. Glycyl lysine isopeptide (Lys-Gly) (interchain with G-Cter in SUMO2) cross-links involve residues K1259, K1276, K1283, and K1286. Phosphoserine is present on residues S1295, S1297, S1299, and S1302. Phosphothreonine is present on T1327. Phosphoserine is present on residues S1332 and S1337. T1343 carries the phosphothreonine modification. Phosphoserine is present on residues S1351 and S1354. Positions 1360 to 1371 are enriched in basic and acidic residues; that stretch reads TSPKHTNKEPKP. Glycyl lysine isopeptide (Lys-Gly) (interchain with G-Cter in SUMO2) cross-links involve residues K1363, K1367, and K1373. Phosphoserine occurs at positions 1374 and 1377. A Glycyl lysine isopeptide (Lys-Gly) (interchain with G-Cter in SUMO2) cross-link involves residue K1387. Residues S1393 and S1395 each carry the phosphoserine modification. Low complexity predominate over residues 1409 to 1433; that stretch reads KPVSKKNVTVKKTAAKSQSSTSTTG. A Glycyl lysine isopeptide (Lys-Gly) (interchain with G-Cter in SUMO2); alternate cross-link involves residue K1424. K1424 carries the N6-acetyllysine; alternate modification. An interaction with PLSCR1 region spans residues 1435–1441; it reads KKRAAPK. The segment covering 1443–1455 has biased composition (basic and acidic residues); sequence AKKDPDLDSDVSK. A Glycyl lysine isopeptide (Lys-Gly) (interchain with G-Cter in SUMO2); alternate cross-link involves residue K1444. K1444 carries the N6-acetyllysine; alternate modification. At S1451 the chain carries Phosphoserine. Residues K1456 and K1461 each participate in a glycyl lysine isopeptide (Lys-Gly) (interchain with G-Cter in SUMO2) cross-link. A Phosphoserine modification is found at S1471. A Phosphothreonine modification is found at T1472. Residues S1473, S1476, and S1478 each carry the phosphoserine modification. Residues K1486 and K1494 each participate in a glycyl lysine isopeptide (Lys-Gly) (interchain with G-Cter in SUMO2) cross-link. A compositionally biased stretch (basic and acidic residues) spans 1493–1504; it reads PKGESDDFHLDL. 2 positions are modified to phosphoserine: S1497 and S1527.

Belongs to the type II topoisomerase family. In terms of assembly, homodimer. Interacts with COPS5. Interacts with RECQL5; this stimulates DNA decatenation. Interacts with SETMAR; stimulates the topoisomerase activity. Interacts with DHX9; this interaction occurs in a E2 enzyme UBE2I- and RNA-dependent manner, negatively regulates DHX9-mediated double-stranded DNA and RNA duplex helicase activity and stimulates TOP2A-mediated supercoiled DNA relaxation activity. Interacts with HNRNPU (via C-terminus); this interaction protects the topoisomerase TOP2A from degradation and positively regulates the relaxation of supercoiled DNA in a RNA-dependent manner. Interacts with MCM3AP. Interacts with ERCC6. Interacts with PLSCR1. Interacts with GCNA; this interaction allows the resolution of topoisomerase II (TOP2A) DNA-protein cross-links. Interacts with POL1RA/RPA1 (via dock II) and UBTF in the context of Pol I complex; may assist Pol I transcription initiation by releasing supercoils occurring during DNA unwinding. Interacts with TPRN; TPRN interacts with a number of DNA damage response proteins, is recruited to sites of DNA damage and may play a role in DNA damage repair. Mg(2+) serves as cofactor. It depends on Mn(2+) as a cofactor. The cofactor is Ca(2+). In terms of processing, phosphorylation has no effect on catalytic activity. However, phosphorylation at Ser-1106 by CSNK1D/CK1 promotes DNA cleavable complex formation.

Its subcellular location is the cytoplasm. It is found in the nucleus. It localises to the nucleoplasm. The protein localises to the nucleolus. The enzyme catalyses ATP-dependent breakage, passage and rejoining of double-stranded DNA.. Key decatenating enzyme that alters DNA topology by binding to two double-stranded DNA molecules, generating a double-stranded break in one of the strands, passing the intact strand through the broken strand, and religating the broken strand. May play a role in regulating the period length of BMAL1 transcriptional oscillation. The protein is DNA topoisomerase 2-alpha (TOP2A) of Sus scrofa (Pig).